The chain runs to 226 residues: Clarin-3 (226 aa).

A helical membrane pass occupies residues 8 to 28 (LMFLSGFLTSLGSVVVICSIL). Asn46 and Asn83 each carry an N-linked (GlcNAc...) asparagine glycan. The next 3 membrane-spanning stretches (helical) occupy residues 92-112 (VVIILLILSLAASLLSSMFTF), 128-148 (GVYTWNGLSASFVFLTMVLFV), and 181-201 (FWLILLVILLNIVTVVIIIFY).

Belongs to the clarin family.

The protein resides in the membrane. The sequence is that of Clarin-3 (Clrn3) from Rattus norvegicus (Rat).